The primary structure comprises 293 residues: Protease HtpX (293 aa).

2 consecutive transmembrane segments (helical) span residues 4–24 (IALF…VLSL) and 34–54 (GLMI…LLMS). His139 contacts Zn(2+). Glu140 is a catalytic residue. His143 contributes to the Zn(2+) binding site. 2 helical membrane-spanning segments follow: residues 158–178 (IVNT…SGFL) and 193–213 (MVYF…ASII). Glu222 lines the Zn(2+) pocket.

Belongs to the peptidase M48B family. It depends on Zn(2+) as a cofactor.

Its subcellular location is the cell inner membrane. This is Protease HtpX from Pectobacterium atrosepticum (strain SCRI 1043 / ATCC BAA-672) (Erwinia carotovora subsp. atroseptica).